We begin with the raw amino-acid sequence, 258 residues long: 14-3-3 protein 6 (258 aa).

A disordered region spans residues Asp-238 to Glu-258. Residues Asp-245–Glu-258 show a composition bias toward basic and acidic residues.

This sequence belongs to the 14-3-3 family. In terms of assembly, homodimer.

In Solanum lycopersicum (Tomato), this protein is 14-3-3 protein 6 (TFT6).